Here is a 250-residue protein sequence, read N- to C-terminus: Triosephosphate isomerase (250 aa).

Position 9–11 (9–11 (NWK)) interacts with substrate. His95 (electrophile) is an active-site residue. Glu167 functions as the Proton acceptor in the catalytic mechanism. Substrate-binding positions include Gly173, Ser213, and 234–235 (GG).

This sequence belongs to the triosephosphate isomerase family. Homodimer.

The protein resides in the cytoplasm. It carries out the reaction D-glyceraldehyde 3-phosphate = dihydroxyacetone phosphate. It functions in the pathway carbohydrate biosynthesis; gluconeogenesis. Its pathway is carbohydrate degradation; glycolysis; D-glyceraldehyde 3-phosphate from glycerone phosphate: step 1/1. Involved in the gluconeogenesis. Catalyzes stereospecifically the conversion of dihydroxyacetone phosphate (DHAP) to D-glyceraldehyde-3-phosphate (G3P). The polypeptide is Triosephosphate isomerase (Exiguobacterium sibiricum (strain DSM 17290 / CCUG 55495 / CIP 109462 / JCM 13490 / 255-15)).